Consider the following 179-residue polypeptide: Large ribosomal subunit protein uL10 (179 aa).

Belongs to the universal ribosomal protein uL10 family. As to quaternary structure, part of the ribosomal stalk of the 50S ribosomal subunit. The N-terminus interacts with L11 and the large rRNA to form the base of the stalk. The C-terminus forms an elongated spine to which L12 dimers bind in a sequential fashion forming a multimeric L10(L12)X complex.

Forms part of the ribosomal stalk, playing a central role in the interaction of the ribosome with GTP-bound translation factors. The chain is Large ribosomal subunit protein uL10 from Kosmotoga olearia (strain ATCC BAA-1733 / DSM 21960 / TBF 19.5.1).